The following is a 324-amino-acid chain: UDP-N-acetylenolpyruvoylglucosamine reductase (324 aa).

One can recognise an FAD-binding PCMH-type domain in the interval 36–203 (FRAGGLAELM…THAIFEGYAE (168 aa)). R183 is a catalytic residue. S232 acts as the Proton donor in catalysis. E302 is a catalytic residue.

The protein belongs to the MurB family. The cofactor is FAD.

It is found in the cytoplasm. The catalysed reaction is UDP-N-acetyl-alpha-D-muramate + NADP(+) = UDP-N-acetyl-3-O-(1-carboxyvinyl)-alpha-D-glucosamine + NADPH + H(+). It participates in cell wall biogenesis; peptidoglycan biosynthesis. Its function is as follows. Cell wall formation. The polypeptide is UDP-N-acetylenolpyruvoylglucosamine reductase (Rhizobium meliloti (strain 1021) (Ensifer meliloti)).